The chain runs to 565 residues: Membrane protein insertase YidC (565 aa).

6 helical membrane-spanning segments follow: residues 6–26, 348–368, 370–390, 437–457, 479–499, and 516–536; these read VLLI…WGKN, LMAL…SLLH, WGWA…PLSA, GGCF…WVLV, PYFI…KLTP, and PLIF…YWVI.

It belongs to the OXA1/ALB3/YidC family. Type 1 subfamily. Interacts with the Sec translocase complex via SecD. Specifically interacts with transmembrane segments of nascent integral membrane proteins during membrane integration.

It is found in the cell inner membrane. In terms of biological role, required for the insertion and/or proper folding and/or complex formation of integral membrane proteins into the membrane. Involved in integration of membrane proteins that insert both dependently and independently of the Sec translocase complex, as well as at least some lipoproteins. Aids folding of multispanning membrane proteins. In Xylella fastidiosa (strain 9a5c), this protein is Membrane protein insertase YidC.